The primary structure comprises 249 residues: Probable septum site-determining protein MinC (249 aa).

Residues 115–141 are disordered; that stretch reads KPAQEAPAQAEPEAAAAPEPANEPAPA. Residues 118–141 are compositionally biased toward low complexity; sequence QEAPAQAEPEAAAAPEPANEPAPA.

It belongs to the MinC family. Interacts with MinD and FtsZ.

Functionally, cell division inhibitor that blocks the formation of polar Z ring septums. Rapidly oscillates between the poles of the cell to destabilize FtsZ filaments that have formed before they mature into polar Z rings. Prevents FtsZ polymerization. This is Probable septum site-determining protein MinC from Marinobacter nauticus (strain ATCC 700491 / DSM 11845 / VT8) (Marinobacter aquaeolei).